A 99-amino-acid polypeptide reads, in one-letter code: MDIDAEDATKSGLHPIELCVYSLLSGNLESIYQSINELRESQAVLILRLKQLRETCKDEQDRINKYCSLNAEIERLDKLETKVDVVLKRYEKMVGSISE.

Residues 34 to 94 (SINELRESQA…VVLKRYEKMV (61 aa)) are a coiled coil.

This sequence belongs to the SNAPIN family. In terms of assembly, component of the biogenesis of lysosome-related organelles complex-1 (BLOC-1).

It is found in the endosome. In terms of biological role, component of the biogenesis of lysosome-related organelles complex-1 (BLOC-1), a complex involved in endosomal cargo sorting. This is Biogenesis of lysosome-related organelles complex 1 subunit SNN1 (SNN1) from Kluyveromyces lactis (strain ATCC 8585 / CBS 2359 / DSM 70799 / NBRC 1267 / NRRL Y-1140 / WM37) (Yeast).